The following is a 175-amino-acid chain: Co-chaperone protein HscB homolog (175 aa).

The J domain maps to 7–79; it reads SHFDLFHLPA…LKRATYLLSL (73 aa).

It belongs to the HscB family. Interacts with HscA and stimulates its ATPase activity.

Functionally, co-chaperone involved in the maturation of iron-sulfur cluster-containing proteins. Seems to help targeting proteins to be folded toward HscA. The sequence is that of Co-chaperone protein HscB homolog from Burkholderia multivorans (strain ATCC 17616 / 249).